The following is a 252-amino-acid chain: Imidazole glycerol phosphate synthase subunit HisF (252 aa).

Residues Asp11 and Asp130 contribute to the active site.

The protein belongs to the HisA/HisF family. In terms of assembly, heterodimer of HisH and HisF.

Its subcellular location is the cytoplasm. The catalysed reaction is 5-[(5-phospho-1-deoxy-D-ribulos-1-ylimino)methylamino]-1-(5-phospho-beta-D-ribosyl)imidazole-4-carboxamide + L-glutamine = D-erythro-1-(imidazol-4-yl)glycerol 3-phosphate + 5-amino-1-(5-phospho-beta-D-ribosyl)imidazole-4-carboxamide + L-glutamate + H(+). Its pathway is amino-acid biosynthesis; L-histidine biosynthesis; L-histidine from 5-phospho-alpha-D-ribose 1-diphosphate: step 5/9. IGPS catalyzes the conversion of PRFAR and glutamine to IGP, AICAR and glutamate. The HisF subunit catalyzes the cyclization activity that produces IGP and AICAR from PRFAR using the ammonia provided by the HisH subunit. The chain is Imidazole glycerol phosphate synthase subunit HisF from Thermococcus gammatolerans (strain DSM 15229 / JCM 11827 / EJ3).